The chain runs to 396 residues: Maltose/maltodextrin-binding periplasmic protein (396 aa).

A signal peptide spans 1–26 (MKIKTGVGILALSALTTMMISAPALA).

Belongs to the bacterial solute-binding protein 1 family. In terms of assembly, the complex is composed of two ATP-binding proteins (MalK), two transmembrane proteins (MalG and MalF) and a solute-binding protein (MalE).

Its subcellular location is the periplasm. Its function is as follows. Part of the ABC transporter complex MalEFGK involved in maltose/maltodextrin import. Binds maltose and higher maltodextrins. The sequence is that of Maltose/maltodextrin-binding periplasmic protein (malE) from Salmonella typhimurium (strain LT2 / SGSC1412 / ATCC 700720).